A 512-amino-acid chain; its full sequence is Podocan-like protein 1 (512 aa).

Positions 1–26 (MAESGLAMWPSLLLLLLLPGPPPVAG) are cleaved as a signal peptide. In terms of domain architecture, LRRNT spans 37–74 (ESLQPLPRACPLRCSCPRVDTVDCDGLDLRVFPDNITR). An N-linked (GlcNAc...) asparagine glycan is attached at Asn-71. 17 LRR repeats span residues 75-96 (AAQH…ELSR), 99-119 (GLRT…PDEA), 125-146 (QLQH…LPRS), 147-167 (LRVA…TFGE), 170-193 (ALRS…AFRG), 196-216 (AIAT…SLPP), 217-238 (SLER…ALSR), 241-261 (QLRE…DATT), 267-288 (SLEY…LPRT), 289-309 (LAIL…RLHG), 312-332 (GLRY…PAGA), 338-359 (GLHT…LPRR), 360-380 (LRAL…DLVA), 383-396 (GLTE…RLAS), 409-430 (ALRS…LPTG), 431-451 (LRTL…PLAG), and 454-474 (QLRE…GPGT).

This sequence belongs to the small leucine-rich proteoglycan (SLRP) family. SLRP class V subfamily. N-glycosylated.

The protein localises to the secreted. Its subcellular location is the extracellular space. It is found in the extracellular matrix. The sequence is that of Podocan-like protein 1 (PODNL1) from Homo sapiens (Human).